The following is a 156-amino-acid chain: Small ribosomal subunit protein uS7 (156 aa).

This sequence belongs to the universal ribosomal protein uS7 family. In terms of assembly, part of the 30S ribosomal subunit. Contacts proteins S9 and S11.

Its function is as follows. One of the primary rRNA binding proteins, it binds directly to 16S rRNA where it nucleates assembly of the head domain of the 30S subunit. Is located at the subunit interface close to the decoding center, probably blocks exit of the E-site tRNA. The sequence is that of Small ribosomal subunit protein uS7 from Cupriavidus metallidurans (strain ATCC 43123 / DSM 2839 / NBRC 102507 / CH34) (Ralstonia metallidurans).